Consider the following 173-residue polypeptide: Nuclear transcription factor Y subunit B-8 (173 aa).

Residues 1-30 (MAESQAKSPGGCGSHESGGDQSPRSLHVRE) form a disordered region. A2 bears the N-acetylalanine mark. Residues 35–41 (LPIANIS) mediate DNA binding. The subunit association domain (SAD) stretch occupies residues 62–73 (VQECVSEFISFV). The segment at 123-173 (DTKGSAKGGDPNAKKDGQSSQNGQFSQLAHQGPYGNSQAQQHMMVPMPGTD) is disordered. Residues 140 to 163 (QSSQNGQFSQLAHQGPYGNSQAQQ) are compositionally biased toward polar residues.

Belongs to the NFYB/HAP3 subunit family. As to quaternary structure, heterotrimeric transcription factor composed of three components, NF-YA, NF-YB and NF-YC. NF-YB and NF-YC must interact and dimerize for NF-YA association and DNA binding. Expressed in flowers and mature rosettes.

Its subcellular location is the nucleus. Its function is as follows. Component of the NF-Y/HAP transcription factor complex. The NF-Y complex stimulates the transcription of various genes by recognizing and binding to a CCAAT motif in promoters. This Arabidopsis thaliana (Mouse-ear cress) protein is Nuclear transcription factor Y subunit B-8 (NFYB8).